We begin with the raw amino-acid sequence, 863 residues long: Leucine--tRNA ligase (863 aa).

The short motif at 42 to 52 is the 'HIGH' region element; sequence PYPSGRLHMGH. The short motif at 618-622 is the 'KMSKS' region element; it reads KMSKS. ATP is bound at residue K621.

This sequence belongs to the class-I aminoacyl-tRNA synthetase family.

It is found in the cytoplasm. It carries out the reaction tRNA(Leu) + L-leucine + ATP = L-leucyl-tRNA(Leu) + AMP + diphosphate. In Colwellia psychrerythraea (strain 34H / ATCC BAA-681) (Vibrio psychroerythus), this protein is Leucine--tRNA ligase.